We begin with the raw amino-acid sequence, 364 residues long: N-alpha-acetyltransferase 30 (364 aa).

The segment covering Met-1–Ala-18 has biased composition (pro residues). Disordered regions lie at residues Met-1–Ala-21, Ser-39–Lys-65, and Glu-110–Ala-164. Phosphoserine is present on residues Ser-39 and Ser-54. Acidic residues predominate over residues Ser-39–His-48. Positions Ala-126–Pro-135 are enriched in basic and acidic residues. Low complexity predominate over residues Ala-152–Ala-164. Phosphoserine is present on residues Ser-192, Ser-198, and Ser-201. An N-acetyltransferase domain is found at Arg-216–Arg-364. Lys-235 bears the N6-acetyllysine mark.

It belongs to the acetyltransferase family. MAK3 subfamily. Component of the N-terminal acetyltransferase C (NatC) complex, which is composed of NAA35, NAA38 and NAA30.

The protein localises to the cytoplasm. Its subcellular location is the nucleus. It carries out the reaction N-terminal L-methionyl-L-leucyl-[protein] + acetyl-CoA = N-terminal N(alpha)-acetyl-L-methionyl-L-leucyl-[protein] + CoA + H(+). The catalysed reaction is N-terminal L-methionyl-L-isoleucyl-[protein] + acetyl-CoA = N-terminal N(alpha)-acetyl-L-methionyl-L-isoleucyl-[protein] + CoA + H(+). The enzyme catalyses N-terminal L-methionyl-L-phenylalanyl-[protein] + acetyl-CoA = N-terminal N(alpha)-acetyl-L-methionyl-L-phenylalanyl-[protein] + CoA + H(+). It catalyses the reaction N-terminal L-methionyl-L-tryptophyl-[protein] + acetyl-CoA = N-terminal N(alpha)-acetyl-L-methionyl-L-tryptophyl-[protein] + CoA + H(+). It carries out the reaction N-terminal L-methionyl-L-tyrosyl-[protein] + acetyl-CoA = N-terminal N(alpha)-acetyl-L-methionyl-L-tyrosyl-[protein] + CoA + H(+). Catalytic subunit of the N-terminal acetyltransferase C (NatC) complex. Catalyzes acetylation of the N-terminal methionine residues of peptides beginning with Met-Leu-Ala and Met-Leu-Gly. N-terminal acetylation protects proteins from ubiquitination and degradation by the N-end rule pathway. Necessary for the lysosomal localization and function of ARL8B sugeesting that ARL8B is a NatC substrate. The polypeptide is N-alpha-acetyltransferase 30 (Naa30) (Mus musculus (Mouse)).